The sequence spans 97 residues: Putative defensin-like protein 237 (97 aa).

Positions 1–23 (MRHATSPIVFCFLIFLVMNHVKG) are cleaved as a signal peptide. Disulfide bonds link Cys-30–Cys-94, Cys-40–Cys-71, Cys-48–Cys-84, and Cys-69–Cys-86.

Belongs to the DEFL family.

The protein localises to the secreted. This Arabidopsis thaliana (Mouse-ear cress) protein is Putative defensin-like protein 237 (SCRL21).